A 251-amino-acid polypeptide reads, in one-letter code: Maleate isomerase (251 aa).

Substrate contacts are provided by residues Asn-14, 76 to 78 (CLV), Tyr-133, and Asn-163. The Nucleophile role is filled by Cys-76. Cys-76 is modified (S-(2-succinyl)cysteine). Cys-194 functions as the Proton donor in the catalytic mechanism. 195–196 (VQ) serves as a coordination point for substrate.

It belongs to the maleate isomerase family. In terms of assembly, homodimer.

It carries out the reaction maleate = fumarate. In terms of biological role, catalyzes cis-trans isomerization of the C2-C3 double bond in maleate to yield fumarate. Shows a strict specificity for maleate, with no activity detected toward structurally related substrates including citraconate, mesaconate, dimethylmaleate, and maleamide. The sequence is that of Maleate isomerase from Nocardia farcinica (strain IFM 10152).